We begin with the raw amino-acid sequence, 1068 residues long: Phosphatidylinositol 4,5-bisphosphate 3-kinase catalytic subunit alpha isoform (1068 aa).

In terms of domain architecture, PI3K-ABD spans 16–105 (MPPRILVECL…QPFLKVIEPV (90 aa)). One can recognise a PI3K-RBD domain in the interval 187–289 (KGQIIVVIWV…GRMPNLMLMA (103 aa)). One can recognise a C2 PI3K-type domain in the interval 330–487 (INSALRIKIL…DWFSSVVKFP (158 aa)). The region spanning 517-694 (LARDNELREN…GLLLESYCRA (178 aa)) is the PIK helical domain. Positions 765–1051 (RLEECRIMSS…QMNDAHHGGW (287 aa)) constitute a PI3K/PI4K catalytic domain. Residues 771–777 (IMSSAKR) are G-loop. Residues 912–920 (GIGDRHNSN) form a catalytic loop region. The segment at 931 to 957 (HIDFGHFLDHKKKKFGYKRERVPFVLT) is activation loop.

This sequence belongs to the PI3/PI4-kinase family. Heterodimer of a catalytic subunit PIK3CA and a p85 regulatory subunit (PIK3R1, PIK3R2 or PIK3R3). Interacts with IRS1 in nuclear extracts. Interacts with RUFY3. Interacts with RASD2. Interacts with APPL1. Interacts with HRAS and KRAS. Interaction with HRAS/KRAS is required for PI3K pathway signaling and cell proliferation stimulated by EGF and FGF2. Interacts with FAM83B; activates the PI3K/AKT signaling cascade.

It carries out the reaction a 1,2-diacyl-sn-glycero-3-phospho-(1D-myo-inositol-4,5-bisphosphate) + ATP = a 1,2-diacyl-sn-glycero-3-phospho-(1D-myo-inositol-3,4,5-trisphosphate) + ADP + H(+). The catalysed reaction is a 1,2-diacyl-sn-glycero-3-phospho-(1D-myo-inositol) + ATP = a 1,2-diacyl-sn-glycero-3-phospho-(1D-myo-inositol-3-phosphate) + ADP + H(+). It catalyses the reaction L-seryl-[protein] + ATP = O-phospho-L-seryl-[protein] + ADP + H(+). The enzyme catalyses 1,2-dioctanoyl-sn-glycero-3-phospho-(1D-myo-inositol-4,5-bisphosphate) + ATP = 1,2-dioctanoyl-sn-glycero-3-phospho-(1D-myo-inositol-3,4,5-trisphosphate) + ADP + H(+). It carries out the reaction 1-octadecanoyl-2-(5Z,8Z,11Z,14Z)-eicosatetraenoyl-sn-glycero-3-phospho-1D-myo-inositol 4,5-bisphosphate + ATP = 1-octadecanoyl-2-(5Z,8Z,11Z,14Z-eicosatetraenoyl)-sn-glycero-3-phospho-(1D-myo-inositol 3,4,5-triphosphate) + ADP + H(+). It functions in the pathway phospholipid metabolism; phosphatidylinositol phosphate biosynthesis. Phosphoinositide-3-kinase (PI3K) phosphorylates phosphatidylinositol (PI) and its phosphorylated derivatives at position 3 of the inositol ring to produce 3-phosphoinositides. Uses ATP and PtdIns(4,5)P2 (phosphatidylinositol 4,5-bisphosphate) to generate phosphatidylinositol 3,4,5-trisphosphate (PIP3). PIP3 plays a key role by recruiting PH domain-containing proteins to the membrane, including AKT1 and PDPK1, activating signaling cascades involved in cell growth, survival, proliferation, motility and morphology. Participates in cellular signaling in response to various growth factors. Involved in the activation of AKT1 upon stimulation by receptor tyrosine kinases ligands such as EGF, insulin, IGF1, VEGFA and PDGF. Involved in signaling via insulin-receptor substrate (IRS) proteins. Essential in endothelial cell migration during vascular development through VEGFA signaling, possibly by regulating RhoA activity. Required for lymphatic vasculature development, possibly by binding to RAS and by activation by EGF and FGF2, but not by PDGF. Regulates invadopodia formation through the PDPK1-AKT1 pathway. Participates in cardiomyogenesis in embryonic stem cells through a AKT1 pathway. Participates in vasculogenesis in embryonic stem cells through PDK1 and protein kinase C pathway. In addition to its lipid kinase activity, it displays a serine-protein kinase activity that results in the autophosphorylation of the p85alpha regulatory subunit as well as phosphorylation of other proteins such as 4EBP1, H-Ras, the IL-3 beta c receptor and possibly others. Plays a role in the positive regulation of phagocytosis and pinocytosis. In Homo sapiens (Human), this protein is Phosphatidylinositol 4,5-bisphosphate 3-kinase catalytic subunit alpha isoform (PIK3CA).